We begin with the raw amino-acid sequence, 234 residues long: t-SNARE protein aex-4 (234 aa).

T-SNARE coiled-coil homology domains follow at residues 37-99 and 170-232; these read AKLN…ITAM and DAIE…VKKL.

It belongs to the SNAP-25 family. In terms of tissue distribution, expressed in intestinal cells.

The protein resides in the cell membrane. Its function is as follows. t-SNARE protein which regulates the secretion of aex-5 from intestinal cells. Involved in the defecation motor program, which is a coordinated series of three muscle contractions that occurs every 45 seconds. The chain is t-SNARE protein aex-4 from Caenorhabditis elegans.